A 284-amino-acid polypeptide reads, in one-letter code: D-tagatose-1,6-bisphosphate aldolase subunit GatY (284 aa).

Catalysis depends on aspartate 82, which acts as the Proton donor. 2 residues coordinate Zn(2+): histidine 83 and histidine 180. Glycine 181 serves as a coordination point for dihydroxyacetone phosphate. Residue histidine 208 participates in Zn(2+) binding. Dihydroxyacetone phosphate contacts are provided by residues 209-211 and 230-233; these read GAS and NVAT.

It belongs to the class II fructose-bisphosphate aldolase family. TagBP aldolase GatY subfamily. Forms a complex with GatZ. It depends on Zn(2+) as a cofactor.

The enzyme catalyses D-tagatofuranose 1,6-bisphosphate = D-glyceraldehyde 3-phosphate + dihydroxyacetone phosphate. The protein operates within carbohydrate metabolism; D-tagatose 6-phosphate degradation; D-glyceraldehyde 3-phosphate and glycerone phosphate from D-tagatose 6-phosphate: step 2/2. In terms of biological role, catalytic subunit of the tagatose-1,6-bisphosphate aldolase GatYZ, which catalyzes the reversible aldol condensation of dihydroxyacetone phosphate (DHAP or glycerone-phosphate) with glyceraldehyde 3-phosphate (G3P) to produce tagatose 1,6-bisphosphate (TBP). Requires GatZ subunit for full activity and stability. Is involved in the catabolism of galactitol. The chain is D-tagatose-1,6-bisphosphate aldolase subunit GatY from Salmonella newport (strain SL254).